A 152-amino-acid polypeptide reads, in one-letter code: Probable flagellum biosynthesis repressor protein FlbT (152 aa).

It belongs to the FlbT family.

Functionally, has a post-transcriptional repressor function in flagellum biogenesis. Associates with the 5'-UTR of fljK mRNA and promotes its degradation. The protein is Probable flagellum biosynthesis repressor protein FlbT of Brucella canis (strain ATCC 23365 / NCTC 10854 / RM-666).